We begin with the raw amino-acid sequence, 162 residues long: Cytochrome c-type biogenesis protein CcmE (162 aa).

Residues 1–8 (MNPVRKKR) are Cytoplasmic-facing. The helical; Signal-anchor for type II membrane protein transmembrane segment at 9–29 (LIIVLAILVGVGAAVGLALSA) threads the bilayer. At 30–162 (LQQNINLFYT…GETSYNQEGK (133 aa)) the chain is on the periplasmic side. Heme-binding residues include His124 and Tyr128. The span at 139–148 (DSGQLKHYEN) shows a compositional bias: basic and acidic residues. Residues 139–162 (DSGQLKHYENGKAAGETSYNQEGK) form a disordered region.

Belongs to the CcmE/CycJ family.

Its subcellular location is the cell inner membrane. Its function is as follows. Heme chaperone required for the biogenesis of c-type cytochromes. Transiently binds heme delivered by CcmC and transfers the heme to apo-cytochromes in a process facilitated by CcmF and CcmH. The chain is Cytochrome c-type biogenesis protein CcmE from Pseudomonas paraeruginosa (strain DSM 24068 / PA7) (Pseudomonas aeruginosa (strain PA7)).